Here is a 130-residue protein sequence, read N- to C-terminus: Small ribosomal subunit protein uS11 (130 aa).

It belongs to the universal ribosomal protein uS11 family. As to quaternary structure, part of the 30S ribosomal subunit. Interacts with proteins S7 and S18. Binds to IF-3.

Located on the platform of the 30S subunit, it bridges several disparate RNA helices of the 16S rRNA. Forms part of the Shine-Dalgarno cleft in the 70S ribosome. The sequence is that of Small ribosomal subunit protein uS11 from Alteromonas mediterranea (strain DSM 17117 / CIP 110805 / LMG 28347 / Deep ecotype).